A 514-amino-acid chain; its full sequence is MNIQEEIKKRRTFAIISHPDAGKTTITEQLLYFGGEIREAGTVKGKKTGTFAKSDWMDIEKQRGISVTSSVMQFDYDGKRVNILDTPGHEDFSEDTYRTLMAVDAAVMVVDSAKGIEAQTKKLFEVVKHRGIPVFTFMNKLDRDGREPLDLLQELEEILGIASYPMNWPIGMGKAFEGLYDLYNQRLELYKGDERFASLEDGDKLFGSNPFYEQVKDDIELLNEAGNEFSEEAILAGELTPVFFGSALTNFGVQTFLETFLKFAPEPHGHKKTDGEIVDPYDKDFSGFVFKIQANMDPRHRDRIAFVRIVSGEFERGMSVNLPRTGKGAKLSNVTQFMAESRENVTNAVAGDIIGVYDTGTYQVGDTLTVGKNKFEFEPLPTFTPEIFMKVSAKNVMKQKSFHKGIEQLVQEGAVQLYKNYQTSEYMLGAVGQLQFEVFKHRMEGEYNAEVVMSPMGKKTVRWIKPEDLDERMSSSRNILAKDRFDQPVFLFENDFALRWFADKYPDVELEEKM.

The tr-type G domain maps to 8 to 268 (KKRRTFAIIS…TFLKFAPEPH (261 aa)). GTP contacts are provided by residues 17–24 (SHPDAGKT), 85–89 (DTPGH), and 139–142 (NKLD).

The protein belongs to the TRAFAC class translation factor GTPase superfamily. Classic translation factor GTPase family. PrfC subfamily.

It is found in the cytoplasm. Its function is as follows. Increases the formation of ribosomal termination complexes and stimulates activities of RF-1 and RF-2. It binds guanine nucleotides and has strong preference for UGA stop codons. It may interact directly with the ribosome. The stimulation of RF-1 and RF-2 is significantly reduced by GTP and GDP, but not by GMP. This chain is Peptide chain release factor 3, found in Streptococcus pneumoniae (strain Hungary19A-6).